The chain runs to 181 residues: Putative NAD(P)H-dependent FMN-containing oxidoreductase YwqN (181 aa).

The protein belongs to the SsuE family. The cofactor is FMN.

Putative NADPH-dependent oxidoreductase. In Bacillus subtilis (strain 168), this protein is Putative NAD(P)H-dependent FMN-containing oxidoreductase YwqN (ywqN).